Consider the following 581-residue polypeptide: MKSHIQSLLEQTLESFKQQGIVPADFEARIQVDRTKDKSHGDLATNLAMMLTKVAGKNPRELAQLIIDTLPASAYVAKVEIAGPGFINFFINDSALADQLQNAVNDEHLGIKLPTPQTVVVDYSSPNLAKEMHVGHLRSTIIGDSVVRALEFLGHKVIRQNHVGDWGTQFGMLLAYMEELRAKNGEKAQLELSDLENFYRAAKLRFDESAEFATRARQLVVELQSGDEYCNKLWREFNDISLSHCHEVYARLGVSLTRADVHGESAYNADLEQVVKDLDAQGLLTESNGAKVVFQEAFRNKEGEPLPVIIQKADGGYLYATSDLAAMRYRSNVLKADRVLYFVDLRQALHFQQVFSLAKLAKFVREDMSLEHLGFGTMNGEDGRPFKTRSGGVVKLVDLLEEANVRALELVRSKNPDMDEVTLTEIARVVGISAVKYADLSKNRTSDYIFSFEQMLSFEGNTAPYLLYAYTRVAGIFKRVTDLDLSQAKIVLEHEKEKDLGNKLAQFGEILSRVVDKGQPHVLCAYLYELAGAFSSFYEACPVLAADNDAQKNSRLLLAQLTARTLQKGLNLLGIETLERM.

The 'HIGH' region signature appears at 126–136 (PNLAKEMHVGH).

It belongs to the class-I aminoacyl-tRNA synthetase family. Monomer.

It is found in the cytoplasm. The enzyme catalyses tRNA(Arg) + L-arginine + ATP = L-arginyl-tRNA(Arg) + AMP + diphosphate. The protein is Arginine--tRNA ligase of Shewanella baltica (strain OS223).